The following is a 140-amino-acid chain: HTH-type transcriptional regulator YfmP (140 aa).

Positions 1–73 (MEWMKIDQVA…LQELQHFMET (73 aa)) constitute an HTH merR-type domain. The segment at residues 6 to 25 (IDQVAKRSGLTKRTIRFYEE) is a DNA-binding region (H-T-H motif).

In terms of biological role, repressor of the yfmOP operon. A mutation in yfmP leads to overexpression of yfmO, probably causing a decrease in cellular copper that is eventually responsible for a reduced copper induction of copZA. This is HTH-type transcriptional regulator YfmP (yfmP) from Bacillus subtilis (strain 168).